Consider the following 391-residue polypeptide: Processive diacylglycerol beta-glucosyltransferase (391 aa).

It belongs to the glycosyltransferase 28 family. UgtP subfamily.

The protein resides in the cell membrane. It carries out the reaction a 1,2-diacyl-3-O-(beta-D-glucopyranosyl)-sn-glycerol + UDP-alpha-D-glucose = a 1,2-diacyl-3-O-(beta-D-Glc-(1-&gt;6)-beta-D-Glc)-sn-glycerol + UDP + H(+). It catalyses the reaction a 1,2-diacyl-sn-glycerol + UDP-alpha-D-glucose = a 1,2-diacyl-3-O-(beta-D-glucopyranosyl)-sn-glycerol + UDP + H(+). It participates in glycolipid metabolism; diglucosyl-diacylglycerol biosynthesis. Functionally, processive glucosyltransferase involved in the biosynthesis of both the bilayer- and non-bilayer-forming membrane glucolipids. Is able to successively transfer two glucosyl residues to diacylglycerol (DAG), thereby catalyzing the formation of beta-monoglucosyl-DAG (3-O-(beta-D-glucopyranosyl)-1,2-diacyl-sn-glycerol) and beta-diglucosyl-DAG (3-O-(beta-D-glucopyranosyl-beta-(1-&gt;6)-D-glucopyranosyl)-1,2-diacyl-sn-glycerol). Beta-diglucosyl-DAG is the predominant glycolipid found in Bacillales and is also used as a membrane anchor for lipoteichoic acid (LTA). This Staphylococcus aureus (strain bovine RF122 / ET3-1) protein is Processive diacylglycerol beta-glucosyltransferase.